A 201-amino-acid chain; its full sequence is 3-isopropylmalate dehydratase small subunit (201 aa).

This sequence belongs to the LeuD family. LeuD type 1 subfamily. As to quaternary structure, heterodimer of LeuC and LeuD.

It carries out the reaction (2R,3S)-3-isopropylmalate = (2S)-2-isopropylmalate. It participates in amino-acid biosynthesis; L-leucine biosynthesis; L-leucine from 3-methyl-2-oxobutanoate: step 2/4. Functionally, catalyzes the isomerization between 2-isopropylmalate and 3-isopropylmalate, via the formation of 2-isopropylmaleate. This Paracoccus denitrificans (strain Pd 1222) protein is 3-isopropylmalate dehydratase small subunit.